Consider the following 1108-residue polypeptide: Valine--tRNA ligase, mitochondrial 1 (1108 aa).

The transit peptide at 1–46 directs the protein to the mitochondrion; it reads MSLLFLRRAKPLFVSCCSATHSRSSFLSPTLTNQLVRSFHGSRTMS. Over residues 57 to 93 the composition is skewed to basic and acidic residues; sequence ELERKKKKEEKAKEKELKKQKALEKERLAELKAKQAK. The disordered stretch occupies residues 57 to 138; that stretch reads ELERKKKKEE…RKRLSSQMAK (82 aa). The 'HIGH' region signature appears at 177-187; the sequence is PNVTGALHIGH. The 'KMSKS' region motif lies at 695-699; sequence KMSKS. Lys698 serves as a coordination point for ATP. Residues 1032-1064 adopt a coiled-coil conformation; it reads AINTEAEQEKIRNKIGELQKQKEKLQKMMSVST.

It belongs to the class-I aminoacyl-tRNA synthetase family.

It is found in the mitochondrion. The protein resides in the cytoplasm. Its subcellular location is the cytosol. The enzyme catalyses tRNA(Val) + L-valine + ATP = L-valyl-tRNA(Val) + AMP + diphosphate. Required for embryo development and seed viability. The polypeptide is Valine--tRNA ligase, mitochondrial 1 (Arabidopsis thaliana (Mouse-ear cress)).